A 444-amino-acid chain; its full sequence is Phosphoglucosamine mutase (444 aa).

Residue Ser102 is the Phosphoserine intermediate of the active site. Mg(2+) contacts are provided by Ser102, Asp241, Asp243, and Asp245. Position 102 is a phosphoserine (Ser102).

The protein belongs to the phosphohexose mutase family. Mg(2+) is required as a cofactor. In terms of processing, activated by phosphorylation.

It carries out the reaction alpha-D-glucosamine 1-phosphate = D-glucosamine 6-phosphate. Its function is as follows. Catalyzes the conversion of glucosamine-6-phosphate to glucosamine-1-phosphate. In Histophilus somni (strain 129Pt) (Haemophilus somnus), this protein is Phosphoglucosamine mutase.